Here is a 427-residue protein sequence, read N- to C-terminus: Diaminobutyrate--2-oxoglutarate transaminase (427 aa).

Lys-264 carries the N6-(pyridoxal phosphate)lysine modification.

The protein belongs to the class-III pyridoxal-phosphate-dependent aminotransferase family. It depends on pyridoxal 5'-phosphate as a cofactor.

The enzyme catalyses L-2,4-diaminobutanoate + 2-oxoglutarate = L-aspartate 4-semialdehyde + L-glutamate. It functions in the pathway amine and polyamine biosynthesis; ectoine biosynthesis; L-ectoine from L-aspartate 4-semialdehyde: step 1/3. Functionally, catalyzes reversively the conversion of L-aspartate beta-semialdehyde (ASA) to L-2,4-diaminobutyrate (DABA) by transamination with L-glutamate. The polypeptide is Diaminobutyrate--2-oxoglutarate transaminase (ectB) (Wolinella succinogenes (strain ATCC 29543 / DSM 1740 / CCUG 13145 / JCM 31913 / LMG 7466 / NCTC 11488 / FDC 602W) (Vibrio succinogenes)).